The chain runs to 139 residues: Nuclear receptor 2C2-associated protein (139 aa).

This sequence belongs to the NR2C2AP family. Interacts with NR2C2/TR4. Expressed in all tissues examined, with highest expression in heart, skeletal muscle and pancreas.

It localises to the nucleus. Its function is as follows. May act as a repressor of NR2C2-mediated transactivation by suppressing the binding between NR2C2/TR4 and the TR4-response element in target genes. The chain is Nuclear receptor 2C2-associated protein (NR2C2AP) from Homo sapiens (Human).